Here is a 651-residue protein sequence, read N- to C-terminus: Peptide-N(4)-(N-acetyl-beta-glucosaminyl)asparagine amidase (651 aa).

Alanine 2 bears the N-acetylalanine mark. The PUB domain maps to 30 to 91 (EASKLLLTYA…EGETHLIFPK (62 aa)). The segment at 116–153 (SSQKVEFSQHPAAVRLPAEQPEDPTGLMQHSGNQPGQP) is disordered. The segment covering 143–152 (MQHSGNQPGQ) has biased composition (polar residues). Zn(2+) contacts are provided by cysteine 247, cysteine 250, cysteine 280, and cysteine 283. Cysteine 306 acts as the Nucleophile in catalysis. Residues histidine 333 and aspartate 350 contribute to the active site. A PAW domain is found at 451-651 (ELGGRVSGSL…LEIIITFSDL (201 aa)).

Belongs to the transglutaminase-like superfamily. PNGase family. In terms of assembly, component of a complex required to couple retrotranslocation, ubiquitination and deglycosylation composed of NGLY1, SAKS1, AMFR, VCP and RAD23B. Interacts with the proteasome components RAD23B and PSMC1. Interacts with directly with VCP. Interacts with DERL1, bringing it close to the endoplasmic reticulum membrane. Interacts with SAKS1. It depends on Zn(2+) as a cofactor.

It localises to the cytoplasm. It carries out the reaction Hydrolysis of an N(4)-(acetyl-beta-D-glucosaminyl)asparagine residue in which the glucosamine residue may be further glycosylated, to yield a (substituted) N-acetyl-beta-D-glucosaminylamine and a peptide containing an aspartate residue.. Its activity is regulated as follows. Inhibited by Z-VAD-fmk, a well-known caspase inhibitor, which inhibits enzyme activity through covalent binding of the carbohydrate to the single Cys-306 residue. Its function is as follows. Specifically deglycosylates the denatured form of N-linked glycoproteins in the cytoplasm and assists their proteasome-mediated degradation. Cleaves the beta-aspartyl-glucosamine (GlcNAc) of the glycan and the amide side chain of Asn, converting Asn to Asp. Prefers proteins containing high-mannose over those bearing complex type oligosaccharides. Can recognize misfolded proteins in the endoplasmic reticulum that are exported to the cytosol to be destroyed and deglycosylate them, while it has no activity toward native proteins. Deglycosylation is a prerequisite for subsequent proteasome-mediated degradation of some, but not all, misfolded glycoproteins. This Rattus norvegicus (Rat) protein is Peptide-N(4)-(N-acetyl-beta-glucosaminyl)asparagine amidase (Ngly1).